The chain runs to 341 residues: tRNA N6-adenosine threonylcarbamoyltransferase (341 aa).

Fe cation is bound by residues His-113 and His-117. Residues 136 to 140, Asp-169, Gly-182, and Asn-280 contribute to the substrate site; that span reads IISGG. Asp-308 lines the Fe cation pocket.

Belongs to the KAE1 / TsaD family. It depends on Fe(2+) as a cofactor.

It localises to the cytoplasm. The catalysed reaction is L-threonylcarbamoyladenylate + adenosine(37) in tRNA = N(6)-L-threonylcarbamoyladenosine(37) in tRNA + AMP + H(+). Required for the formation of a threonylcarbamoyl group on adenosine at position 37 (t(6)A37) in tRNAs that read codons beginning with adenine. Is involved in the transfer of the threonylcarbamoyl moiety of threonylcarbamoyl-AMP (TC-AMP) to the N6 group of A37, together with TsaE and TsaB. TsaD likely plays a direct catalytic role in this reaction. The protein is tRNA N6-adenosine threonylcarbamoyltransferase of Anaplasma marginale (strain St. Maries).